The following is a 186-amino-acid chain: Large ribosomal subunit protein uL22 (186 aa).

Composition is skewed to basic and acidic residues over residues 157-167 (VSKATDDEPTK) and 177-186 (RQKEKMLRSE). Residues 157 to 186 (VSKATDDEPTKKKLSKKKLQRQKEKMLRSE) form a disordered region.

This sequence belongs to the universal ribosomal protein uL22 family.

In Drosophila yakuba (Fruit fly), this protein is Large ribosomal subunit protein uL22 (RpL17).